The primary structure comprises 131 residues: 23S rRNA-specific endonuclease VapC20 (131 aa).

The PINc domain occupies Ile2 to Phe125. 2 residues coordinate Mg(2+): Asp5 and Asp98.

It belongs to the PINc/VapC protein family. Mg(2+) is required as a cofactor.

Its function is as follows. Toxic component of a type II toxin-antitoxin (TA) system. An endoribonuclease that cleaves 23S rRNA in the sarcin-ricin loop (SRL). The SRL sequence is highly conserved and is implicated in GTP hydrolysis by EF-Tu and EF-G. Acts on purified ribosomes but not on isolated RNA. Its toxic effect is neutralized by coexpression with cognate antitoxin VapB20. This is 23S rRNA-specific endonuclease VapC20 (vapC20) from Mycobacterium tuberculosis (strain CDC 1551 / Oshkosh).